Here is a 256-residue protein sequence, read N- to C-terminus: Ras-related protein RabJ (256 aa).

16–23 serves as a coordination point for GTP; sequence GSSDVGKT. Positions 38-46 match the Effector region motif; it reads LTSTIGASF. GTP is bound by residues 64-68 and 122-125; these read DSAGQ and NKID. Residues 229–256 are disordered; sequence NGHLQGSINGHNNQNSTNYSDNSDQCCG. Positions 230-256 are enriched in polar residues; that stretch reads GHLQGSINGHNNQNSTNYSDNSDQCCG. 2 S-geranylgeranyl cysteine lipidation sites follow: C254 and C255.

This sequence belongs to the small GTPase superfamily. Rab family.

Its subcellular location is the cell membrane. The polypeptide is Ras-related protein RabJ (rabJ) (Dictyostelium discoideum (Social amoeba)).